A 159-amino-acid chain; its full sequence is Ribosomal RNA large subunit methyltransferase H (159 aa).

Residues Leu-76 and Gly-108 each contribute to the S-adenosyl-L-methionine site.

It belongs to the RNA methyltransferase RlmH family. In terms of assembly, homodimer.

The protein resides in the cytoplasm. It carries out the reaction pseudouridine(1915) in 23S rRNA + S-adenosyl-L-methionine = N(3)-methylpseudouridine(1915) in 23S rRNA + S-adenosyl-L-homocysteine + H(+). Functionally, specifically methylates the pseudouridine at position 1915 (m3Psi1915) in 23S rRNA. This is Ribosomal RNA large subunit methyltransferase H from Ligilactobacillus salivarius (strain UCC118) (Lactobacillus salivarius).